The chain runs to 464 residues: Fumarate hydratase class II (464 aa).

Residues 98–100, Arg126, 129–132, 139–141, and Thr187 contribute to the substrate site; these read SGT, HPND, and SSN. The Proton donor/acceptor role is filled by His188. The active site involves Ser318. Substrate is bound by residues Ser319 and 324 to 326; that span reads KVN.

It belongs to the class-II fumarase/aspartase family. Fumarase subfamily. As to quaternary structure, homotetramer.

It is found in the cytoplasm. The enzyme catalyses (S)-malate = fumarate + H2O. It functions in the pathway carbohydrate metabolism; tricarboxylic acid cycle; (S)-malate from fumarate: step 1/1. In terms of biological role, involved in the TCA cycle. Catalyzes the stereospecific interconversion of fumarate to L-malate. The protein is Fumarate hydratase class II of Photorhabdus laumondii subsp. laumondii (strain DSM 15139 / CIP 105565 / TT01) (Photorhabdus luminescens subsp. laumondii).